The sequence spans 711 residues: Polyribonucleotide nucleotidyltransferase (711 aa).

2 residues coordinate Mg(2+): Asp-486 and Asp-492. The 60-residue stretch at 553–612 (PRIHTIKINPDKIKDVIGKGGSVIRALTEETGTTIEIEDDGTVKIAATDGEKAKNAIRRI) folds into the KH domain. The S1 motif domain occupies 622–690 (GRVYNGKVTR…RQGRIRLSIK (69 aa)). The disordered stretch occupies residues 689-711 (IKEATEQSQPAAAPEAPAAEQGE). The span at 694–711 (EQSQPAAAPEAPAAEQGE) shows a compositional bias: low complexity.

Belongs to the polyribonucleotide nucleotidyltransferase family. In terms of assembly, component of the RNA degradosome, which is a multiprotein complex involved in RNA processing and mRNA degradation. Mg(2+) serves as cofactor.

The protein localises to the cytoplasm. The enzyme catalyses RNA(n+1) + phosphate = RNA(n) + a ribonucleoside 5'-diphosphate. Its function is as follows. Involved in mRNA degradation. Catalyzes the phosphorolysis of single-stranded polyribonucleotides processively in the 3'- to 5'-direction. The polypeptide is Polyribonucleotide nucleotidyltransferase (Escherichia fergusonii (strain ATCC 35469 / DSM 13698 / CCUG 18766 / IAM 14443 / JCM 21226 / LMG 7866 / NBRC 102419 / NCTC 12128 / CDC 0568-73)).